We begin with the raw amino-acid sequence, 156 residues long: Snaclec A1 (156 aa).

A signal peptide spans 1–23 (MGRSISVSFGLLVVFLSLSGTGA). Intrachain disulfides connect C27-C38, C55-C154, and C129-C146. A C-type lectin domain is found at 34-155 (HEGHCYKVFN…CGQPYRFTCE (122 aa)).

It belongs to the snaclec family. As to quaternary structure, heterodimer; disulfide-linked. Expressed by the venom gland.

It is found in the secreted. Functionally, interferes with one step of hemostasis (modulation of platelet aggregation, or coagulation cascade, for example). The polypeptide is Snaclec A1 (Macrovipera lebetinus (Levantine viper)).